The following is a 195-amino-acid chain: Pyruvoyl-dependent arginine decarboxylase AaxB (195 aa).

Ser53 carries the pyruvic acid (Ser) modification.

This sequence belongs to the pyruvoyl-dependent arginine decarboxylase family. As to quaternary structure, trimer of an alpha-beta dimer. The cofactor is pyruvate.

It is found in the cytoplasm. It carries out the reaction L-arginine + H(+) = agmatine + CO2. Its function is as follows. Part of the AaxABC system, catalyzes the decarboxylation of L-arginine. The arginine uptake by the bacterium in the macrophage may be a virulence factor against the host innate immune response. The polypeptide is Pyruvoyl-dependent arginine decarboxylase AaxB (aaxB) (Chlamydia trachomatis serovar D (strain ATCC VR-885 / DSM 19411 / UW-3/Cx)).